Here is a 346-residue protein sequence, read N- to C-terminus: N-acetyl-gamma-glutamyl-phosphate reductase (346 aa).

C150 is an active-site residue.

Belongs to the NAGSA dehydrogenase family. Type 1 subfamily.

Its subcellular location is the cytoplasm. The enzyme catalyses N-acetyl-L-glutamate 5-semialdehyde + phosphate + NADP(+) = N-acetyl-L-glutamyl 5-phosphate + NADPH + H(+). Its pathway is amino-acid biosynthesis; L-arginine biosynthesis; N(2)-acetyl-L-ornithine from L-glutamate: step 3/4. Catalyzes the NADPH-dependent reduction of N-acetyl-5-glutamyl phosphate to yield N-acetyl-L-glutamate 5-semialdehyde. This chain is N-acetyl-gamma-glutamyl-phosphate reductase, found in Desulforudis audaxviator (strain MP104C).